A 286-amino-acid polypeptide reads, in one-letter code: Phycobilisome 32.1 kDa linker polypeptide, phycocyanin-associated, rod (286 aa).

The PBS-linker domain occupies 2–180 (AITAAASRLG…LYRGYANSDR (179 aa)). In terms of domain architecture, CpcD-like spans 234-286 (DRVYRIEVTGVRSPGYPSVRRSSYAIIVPYERLSEKIQQIHKLGGKIVSITSA).

The protein belongs to the phycobilisome linker protein family.

Its subcellular location is the cellular thylakoid membrane. Rod linker protein, associated with phycocyanin. Linker polypeptides determine the state of aggregation and the location of the disk-shaped phycobiliprotein units within the phycobilisome and modulate their spectroscopic properties in order to mediate a directed and optimal energy transfer. The polypeptide is Phycobilisome 32.1 kDa linker polypeptide, phycocyanin-associated, rod (cpcC) (Mastigocladus laminosus (Fischerella sp.)).